Here is a 377-residue protein sequence, read N- to C-terminus: Queuine tRNA-ribosyltransferase (377 aa).

Asp-89 (proton acceptor) is an active-site residue. Residues 89–93, Asp-143, Gln-187, and Gly-214 each bind substrate; that span reads DSGGF. An RNA binding region spans residues 245-251; that stretch reads GVGKPED. Asp-264 (nucleophile) is an active-site residue. Residues 269-273 are RNA binding; important for wobble base 34 recognition; that stretch reads TRNAR. 4 residues coordinate Zn(2+): Cys-302, Cys-304, Cys-307, and His-333.

The protein belongs to the queuine tRNA-ribosyltransferase family. In terms of assembly, homodimer. Within each dimer, one monomer is responsible for RNA recognition and catalysis, while the other monomer binds to the replacement base PreQ1. It depends on Zn(2+) as a cofactor.

It catalyses the reaction 7-aminomethyl-7-carbaguanine + guanosine(34) in tRNA = 7-aminomethyl-7-carbaguanosine(34) in tRNA + guanine. Its pathway is tRNA modification; tRNA-queuosine biosynthesis. Functionally, catalyzes the base-exchange of a guanine (G) residue with the queuine precursor 7-aminomethyl-7-deazaguanine (PreQ1) at position 34 (anticodon wobble position) in tRNAs with GU(N) anticodons (tRNA-Asp, -Asn, -His and -Tyr). Catalysis occurs through a double-displacement mechanism. The nucleophile active site attacks the C1' of nucleotide 34 to detach the guanine base from the RNA, forming a covalent enzyme-RNA intermediate. The proton acceptor active site deprotonates the incoming PreQ1, allowing a nucleophilic attack on the C1' of the ribose to form the product. After dissociation, two additional enzymatic reactions on the tRNA convert PreQ1 to queuine (Q), resulting in the hypermodified nucleoside queuosine (7-(((4,5-cis-dihydroxy-2-cyclopenten-1-yl)amino)methyl)-7-deazaguanosine). The polypeptide is Queuine tRNA-ribosyltransferase (Shewanella sediminis (strain HAW-EB3)).